Here is a 423-residue protein sequence, read N- to C-terminus: Glucose-1-phosphate adenylyltransferase (423 aa).

Residues Tyr-98, Gly-163, Glu-178–Lys-179, and Ser-189 contribute to the alpha-D-glucose 1-phosphate site.

Belongs to the bacterial/plant glucose-1-phosphate adenylyltransferase family. Homotetramer.

It catalyses the reaction alpha-D-glucose 1-phosphate + ATP + H(+) = ADP-alpha-D-glucose + diphosphate. It participates in glycan biosynthesis; glycogen biosynthesis. Functionally, involved in the biosynthesis of ADP-glucose, a building block required for the elongation reactions to produce glycogen. Catalyzes the reaction between ATP and alpha-D-glucose 1-phosphate (G1P) to produce pyrophosphate and ADP-Glc. This Thermotoga maritima (strain ATCC 43589 / DSM 3109 / JCM 10099 / NBRC 100826 / MSB8) protein is Glucose-1-phosphate adenylyltransferase.